A 391-amino-acid polypeptide reads, in one-letter code: MAVSESQLKKMMSKYKYRDLTVRQTVNVIAMYKDLKPVLDSYVFNDGSSRELVNLTGTIPVRYRGNIYNIPICLWLLDTYPYNPPICFVKPTSSMTIKTGKHVDANGKIYLPYLHDWKHPRSELLELIQIMIVIFGEEPPVFSRPTVSASYPPYTAAGPPNTSYLPSMPSGISAYPSGYPPNPSGYPGCPYPPAGPYPATTSSQYPSQPPVTTAGPSRDGTISEDTIRASLISAVSDKLRWRMKEEMDGAQAELNALKRTEEDLKKGHQKLEEMVTRLDQEVAEVDKNIELLKKKDEELSSALEKMENQSENNDIDEVIIPTAPLYKQILNLYAEENAIEDTIFYLGEALRRGVIDLDVFLKHVRLLSRKQFQLRALMQKARKTAGLSDLY.

Ala-2 is modified (N-acetylalanine). One can recognise a UEV domain in the interval 2–145 (AVSESQLKKM…GEEPPVFSRP (144 aa)). Positions 159 to 163 (PPNTS) are interaction with CEP55. The interval 195 to 222 (GPYPATTSSQYPSQPPVTTAGPSRDGTI) is disordered. Residues 200 to 215 (TTSSQYPSQPPVTTAG) show a composition bias toward polar residues. Thr-221 bears the Phosphothreonine mark. Residues 238–317 (KLRWRMKEEM…NQSENNDIDE (80 aa)) adopt a coiled-coil conformation. A PTAP motif motif is present at residues 321–324 (PTAP). Positions 323-391 (APLYKQILNL…RKTAGLSDLY (69 aa)) constitute an SB domain.

It belongs to the ubiquitin-conjugating enzyme family. UEV subfamily. In terms of assembly, component of the ESCRT-I complex (endosomal sorting complex required for transport I) which consists of TSG101, VPS28, a VPS37 protein (VPS37A to -D) and MVB12A or MVB12B in a 1:1:1:1 stoichiometry. Interacts with VPS37A, VPS37B and VPS37C. Interacts with DMAP1. Interacts with ubiquitin. Interacts with AATF. Interacts with stathmin and GMCL. Component of an ESCRT-I complex (endosomal sorting complex required for transport I) which consists of TSG101, VPS28, VPS37A and UBAP1 in a 1:1:1:1 stoichiometry. Interacts with HGS; the interaction mediates the association with the ESCRT-0 complex. Interacts with GGA1 and GGA3. Interacts (via UEV domain) with PDCD6IP/AIP1. Interacts with VPS28, SNF8 and VPS36. Self-associates. Interacts with MVB12A; the association appears to be mediated by the TSG101-VPS37 binary subcomplex. Interacts with VPS37D. Interacts with LRSAM1. Interacts with CEP55; the interaction is required for cytokinesis. Interacts with PDCD6. Interacts with LITAF. Interacts with MGRN1. Interacts with ARRDC1; recruits TSG101 to the plasma membrane. Monoubiquitinated at multiple sites by LRSAM1 and by MGRN1. Ubiquitination inactivates it, possibly by regulating its shuttling between an active membrane-bound protein and an inactive soluble form. Ubiquitination by MGRN1 requires the presence of UBE2D1.

Its subcellular location is the cytoplasm. It localises to the early endosome membrane. The protein localises to the late endosome membrane. It is found in the cytoskeleton. The protein resides in the microtubule organizing center. Its subcellular location is the centrosome. It localises to the midbody. The protein localises to the midbody ring. It is found in the nucleus. In terms of biological role, component of the ESCRT-I complex, a regulator of vesicular trafficking process. Binds to ubiquitinated cargo proteins and is required for the sorting of endocytic ubiquitinated cargos into multivesicular bodies (MVBs). Mediates the association between the ESCRT-0 and ESCRT-I complex. Required for completion of cytokinesis; the function requires CEP55. May be involved in cell growth and differentiation. Acts as a negative growth regulator. Required for the exosomal release of SDCBP, CD63 and syndecan. It may also play a role in the extracellular release of microvesicles that differ from the exosomes. This Rattus norvegicus (Rat) protein is Tumor susceptibility gene 101 protein (Tsg101).